The following is a 1404-amino-acid chain: DNA-directed RNA polymerase subunit beta' (1404 aa).

Positions 72, 74, 87, and 90 each coordinate Zn(2+). Mg(2+) is bound by residues aspartate 463, aspartate 465, and aspartate 467. Residues cysteine 811, cysteine 885, cysteine 892, and cysteine 895 each contribute to the Zn(2+) site.

Belongs to the RNA polymerase beta' chain family. The RNAP catalytic core consists of 2 alpha, 1 beta, 1 beta' and 1 omega subunit. When a sigma factor is associated with the core the holoenzyme is formed, which can initiate transcription. Mg(2+) is required as a cofactor. Requires Zn(2+) as cofactor.

The enzyme catalyses RNA(n) + a ribonucleoside 5'-triphosphate = RNA(n+1) + diphosphate. In terms of biological role, DNA-dependent RNA polymerase catalyzes the transcription of DNA into RNA using the four ribonucleoside triphosphates as substrates. The protein is DNA-directed RNA polymerase subunit beta' of Jannaschia sp. (strain CCS1).